A 352-amino-acid chain; its full sequence is Ribosomal RNA large subunit methyltransferase M (352 aa).

Residues Ser184, 217–220, Asp236, Asp256, and Asp272 contribute to the S-adenosyl-L-methionine site; that span reads APGG. Catalysis depends on Lys301, which acts as the Proton acceptor.

This sequence belongs to the class I-like SAM-binding methyltransferase superfamily. RNA methyltransferase RlmE family. RlmM subfamily. As to quaternary structure, monomer.

The protein localises to the cytoplasm. The catalysed reaction is cytidine(2498) in 23S rRNA + S-adenosyl-L-methionine = 2'-O-methylcytidine(2498) in 23S rRNA + S-adenosyl-L-homocysteine + H(+). In terms of biological role, catalyzes the 2'-O-methylation at nucleotide C2498 in 23S rRNA. In Pseudomonas aeruginosa (strain LESB58), this protein is Ribosomal RNA large subunit methyltransferase M.